A 434-amino-acid polypeptide reads, in one-letter code: Peptidase B (434 aa).

Positions 198 and 203 each coordinate Mn(2+). The active site involves Lys-210. Mn(2+) is bound by residues Asp-221, Asp-280, and Glu-282. The active site involves Arg-284.

It belongs to the peptidase M17 family. As to quaternary structure, homohexamer. Requires Mn(2+) as cofactor.

The protein resides in the cytoplasm. The enzyme catalyses Release of an N-terminal amino acid, Xaa, from a peptide or arylamide. Xaa is preferably Glu or Asp but may be other amino acids, including Leu, Met, His, Cys and Gln.. Probably plays an important role in intracellular peptide degradation. This chain is Peptidase B, found in Pasteurella multocida (strain Pm70).